The sequence spans 195 residues: UPF0301 protein Bpro_1142 (195 aa).

The protein belongs to the UPF0301 (AlgH) family.

This Polaromonas sp. (strain JS666 / ATCC BAA-500) protein is UPF0301 protein Bpro_1142.